The primary structure comprises 376 residues: Serpin B6 (376 aa).

The residue at position 1 (Met1) is an N-acetylmethionine. Residue Ser151 is modified to Phosphoserine. Lys195 carries the N6-acetyllysine modification.

Belongs to the serpin family. Ov-serpin subfamily. Forms a complex with the monomeric form of beta-tryptase.

It localises to the cytoplasm. In terms of biological role, inhibitor of cathepsin G, kallikrein-8 and thrombin. May play an important role in the inner ear in the protection against leakage of lysosomal content during stress. May be involved in the regulation of serine proteinases present in the brain or extravasated from the blood. In Macaca fascicularis (Crab-eating macaque), this protein is Serpin B6 (SERPINB6).